Here is a 118-residue protein sequence, read N- to C-terminus: Large ribosomal subunit protein bL19 (118 aa).

The protein belongs to the bacterial ribosomal protein bL19 family.

This protein is located at the 30S-50S ribosomal subunit interface and may play a role in the structure and function of the aminoacyl-tRNA binding site. This Nautilia profundicola (strain ATCC BAA-1463 / DSM 18972 / AmH) protein is Large ribosomal subunit protein bL19.